A 272-amino-acid polypeptide reads, in one-letter code: Dermonecrotic toxin LvSicTox-alphaIC1biv (272 aa).

His5 is a catalytic residue. Mg(2+)-binding residues include Glu25 and Asp27. His41 functions as the Nucleophile in the catalytic mechanism. Cystine bridges form between Cys45-Cys51 and Cys47-Cys189. Position 84 (Asp84) interacts with Mg(2+).

This sequence belongs to the arthropod phospholipase D family. Class II subfamily. The cofactor is Mg(2+). In terms of tissue distribution, expressed by the venom gland.

It localises to the secreted. It catalyses the reaction an N-(acyl)-sphingosylphosphocholine = an N-(acyl)-sphingosyl-1,3-cyclic phosphate + choline. It carries out the reaction an N-(acyl)-sphingosylphosphoethanolamine = an N-(acyl)-sphingosyl-1,3-cyclic phosphate + ethanolamine. The enzyme catalyses a 1-acyl-sn-glycero-3-phosphocholine = a 1-acyl-sn-glycero-2,3-cyclic phosphate + choline. The catalysed reaction is a 1-acyl-sn-glycero-3-phosphoethanolamine = a 1-acyl-sn-glycero-2,3-cyclic phosphate + ethanolamine. Functionally, dermonecrotic toxins cleave the phosphodiester linkage between the phosphate and headgroup of certain phospholipids (sphingolipid and lysolipid substrates), forming an alcohol (often choline) and a cyclic phosphate. This toxin acts on sphingomyelin (SM). It may also act on ceramide phosphoethanolamine (CPE), lysophosphatidylcholine (LPC) and lysophosphatidylethanolamine (LPE), but not on lysophosphatidylserine (LPS), and lysophosphatidylglycerol (LPG). It acts by transphosphatidylation, releasing exclusively cyclic phosphate products as second products. Induces dermonecrosis, hemolysis, increased vascular permeability, edema, inflammatory response, and platelet aggregation. The polypeptide is Dermonecrotic toxin LvSicTox-alphaIC1biv (Loxosceles variegata (Recluse spider)).